The primary structure comprises 875 residues: Serine/threonine-protein kinase D2 (875 aa).

Positions 1–33 are disordered; it reads MAAAPSHPAGLPCSPGPGSPPPPGGSDLQSLPP. Residues 14 to 24 are compositionally biased toward pro residues; it reads SPGPGSPPPPG. S26 and S30 each carry phosphoserine. Y87 carries the phosphotyrosine modification. The Phorbol-ester/DAG-type 1 zinc finger occupies 138–188; that stretch reads PHALTVHSYRAPAFCDHCGEMLFGLVRQGLKCDGCGLNYHKRCAFSIPNNC. Residues S197, S198, S200, S203, S206, S211, S212, and S214 each carry the phosphoserine modification. The interval 224–247 is disordered; sequence RSTTDLLPRRPPSSSSSSSSSSFY. Residues 236–245 are compositionally biased toward low complexity; the sequence is SSSSSSSSSS. Residue S244 is modified to Phosphoserine; by CSNK1D and CSNK1E. A Phosphoserine modification is found at S245. A Phorbol-ester/DAG-type 2 zinc finger spans residues 265–315; that stretch reads PHTFLIHSYTRPTVCQACKKLLKGLFRQGLQCKDCKFNCHKRCATRVPNDC. The PH domain maps to 398 to 510; that stretch reads TTLREGWVVH…WETAIRQALM (113 aa). Position 408 is a phosphotyrosine (Y408). The residue at position 439 (Y439) is a Phosphotyrosine; by ABL1. S519 is modified (phosphoserine). The Protein kinase domain maps to 552–808; sequence IFPDEVLGSG…VDKSLSHPWL (257 aa). ATP-binding positions include 558 to 566 and K581; that span reads LGSGQFGVV. The Proton acceptor role is filled by D675. The residue at position 707 (S707) is a Phosphoserine; by PKC. S711 carries the post-translational modification Phosphoserine. At Y718 the chain carries Phosphotyrosine; by ABL1. The Important for ABL1-mediated Tyr-718 phosphorylation motif lies at 725–727; the sequence is LNQ. S873 is subject to Phosphoserine; by autocatalysis.

The protein belongs to the protein kinase superfamily. CAMK Ser/Thr protein kinase family. PKD subfamily. In terms of assembly, interacts (via C-terminus) with LCK. Interacts (via N-terminus and zing-finger domain 1 and 2) with PRKCD in response to oxidative stress; the interaction is independent of PRKD2 tyrosine phosphorylation. The cofactor is Mg(2+). In terms of processing, phosphorylation of Ser-873 correlates with the activation status of the kinase. Ser-707 is probably phosphorylated by PKC. Phosphorylation at Ser-244 by CSNK1D and CSNK1E promotes nuclear localization and substrate targeting. Phosphorylation at Ser-244, Ser-707 and Ser-711 is required for nuclear localization. Phosphorylated at Tyr-438 by ABL1 in response to oxidative stress. Phosphorylated at Tyr-718 by ABL1 specifically in response to oxidative stress; requires prior phosphorylation at Ser-707 or/and Ser-711.

Its subcellular location is the cytoplasm. The protein resides in the cell membrane. The protein localises to the golgi apparatus. It localises to the trans-Golgi network. It carries out the reaction L-seryl-[protein] + ATP = O-phospho-L-seryl-[protein] + ADP + H(+). It catalyses the reaction L-threonyl-[protein] + ATP = O-phospho-L-threonyl-[protein] + ADP + H(+). With respect to regulation, activated by DAG and phorbol esters. Phorbol-ester/DAG-type domains bind DAG, mediating translocation to membranes. Autophosphorylation of Ser-711 and phosphorylation of Ser-707 by PKC relieves auto-inhibition by the PH domain. Catalytic activity is further increased by phosphorylation at Tyr-718 in response to oxidative stress. In terms of biological role, serine/threonine-protein kinase that converts transient diacylglycerol (DAG) signals into prolonged physiological effects downstream of PKC, and is involved in the regulation of cell proliferation via MAPK1/3 (ERK1/2) signaling, oxidative stress-induced NF-kappa-B activation, inhibition of HDAC7 transcriptional repression, signaling downstream of T-cell antigen receptor (TCR) and cytokine production, and plays a role in Golgi membrane trafficking, angiogenesis, secretory granule release and cell adhesion. May potentiate mitogenesis induced by the neuropeptide bombesin by mediating an increase in the duration of MAPK1/3 (ERK1/2) signaling, which leads to accumulation of immediate-early gene products including FOS that stimulate cell cycle progression. In response to oxidative stress, is phosphorylated at Tyr-438 and Tyr-718 by ABL1, which leads to the activation of PRKD2 without increasing its catalytic activity, and mediates activation of NF-kappa-B. In response to the activation of the gastrin receptor CCKBR, is phosphorylated at Ser-244 by CSNK1D and CSNK1E, translocates to the nucleus, phosphorylates HDAC7, leading to nuclear export of HDAC7 and inhibition of HDAC7 transcriptional repression of NR4A1/NUR77. Upon TCR stimulation, is activated independently of ZAP70, translocates from the cytoplasm to the nucleus and is required for interleukin-2 (IL2) promoter up-regulation. During adaptive immune responses, is required in peripheral T-lymphocytes for the production of the effector cytokines IL2 and IFNG after TCR engagement and for optimal induction of antibody responses to antigens. In epithelial cells stimulated with lysophosphatidic acid (LPA), is activated through a PKC-dependent pathway and mediates LPA-stimulated interleukin-8 (IL8) secretion via a NF-kappa-B-dependent pathway. During TCR-induced T-cell activation, interacts with and is activated by the tyrosine kinase LCK, which results in the activation of the NFAT transcription factors. In the trans-Golgi network (TGN), regulates the fission of transport vesicles that are on their way to the plasma membrane and in polarized cells is involved in the transport of proteins from the TGN to the basolateral membrane. Plays an important role in endothelial cell proliferation and migration prior to angiogenesis, partly through modulation of the expression of KDR/VEGFR2 and FGFR1, two key growth factor receptors involved in angiogenesis. In secretory pathway, is required for the release of chromogranin-A (CHGA)-containing secretory granules from the TGN. Downstream of PRKCA, plays important roles in angiotensin-2-induced monocyte adhesion to endothelial cells. In Rattus norvegicus (Rat), this protein is Serine/threonine-protein kinase D2 (Prkd2).